Reading from the N-terminus, the 504-residue chain is Lysine--tRNA ligase (504 aa).

The short motif at 23–31 (PSGPIHIGN) is the 'HIGH' region element.

The protein belongs to the class-I aminoacyl-tRNA synthetase family.

It is found in the cytoplasm. It catalyses the reaction tRNA(Lys) + L-lysine + ATP = L-lysyl-tRNA(Lys) + AMP + diphosphate. This chain is Lysine--tRNA ligase, found in Picrophilus torridus (strain ATCC 700027 / DSM 9790 / JCM 10055 / NBRC 100828 / KAW 2/3).